The primary structure comprises 228 residues: Thymidine kinase (228 aa).

Position 23-30 (23-30 (GNIGCGKS)) interacts with ATP. The active-site Proton acceptor is Glu-50. Residues Tyr-68, Gln-79, and Phe-109 each contribute to the substrate site. Position 157 (Arg-157) interacts with ATP.

This sequence belongs to the DCK/DGK family.

The enzyme catalyses thymidine + ATP = dTMP + ADP + H(+). The protein is Thymidine kinase (TK) of Ictaluridae (bullhead catfishes).